The following is a 262-amino-acid chain: MAILIELQDICVDFEQRRVLDNIRLTLTKGNITTLIGPNGAGKSTLVKVILGLQSLSSGKIIRQSGIRIGYVPQKLKLNDTLPLTVNRFLKLAGRFSTQELSEALRLVGGEHLQSSDMHKLSGGETQRVLLARALLQRPDLLVLDEPAQGVDVQGQIDLYDLIHTLRNRFGCAVLMVSHDLHLVMAKTDEVICLQHHVCCSGSPESIAKHPSYLAMFGHRSRDTLAFYQHHHEHHHHDLSGLPVKGKASVCSHHSHGHHKHD.

The region spanning 5–220 is the ABC transporter domain; the sequence is IELQDICVDF…PSYLAMFGHR (216 aa). An ATP-binding site is contributed by 37 to 44; sequence GPNGAGKS.

It belongs to the ABC transporter superfamily. Zinc importer (TC 3.A.1.15.5) family. In terms of assembly, the complex is composed of two ATP-binding proteins (ZnuC), two transmembrane proteins (ZnuB) and a solute-binding protein (ZnuA).

It localises to the cell inner membrane. It carries out the reaction Zn(2+)(out) + ATP(in) + H2O(in) = Zn(2+)(in) + ADP(in) + phosphate(in) + H(+)(in). Its function is as follows. Part of the ABC transporter complex ZnuABC involved in zinc import. Responsible for energy coupling to the transport system. This chain is Zinc import ATP-binding protein ZnuC, found in Vibrio cholerae serotype O1 (strain ATCC 39315 / El Tor Inaba N16961).